A 231-amino-acid chain; its full sequence is Orotate phosphoribosyltransferase (231 aa).

5-phospho-alpha-D-ribose 1-diphosphate is bound by residues Lys27, 79 to 80 (YK), Arg106, Lys107, Lys110, His112, and 133 to 141 (DDVMTAGTA). Positions 137 and 166 each coordinate orotate.

The protein belongs to the purine/pyrimidine phosphoribosyltransferase family. PyrE subfamily. In terms of assembly, homodimer. It depends on Mg(2+) as a cofactor.

The catalysed reaction is orotidine 5'-phosphate + diphosphate = orotate + 5-phospho-alpha-D-ribose 1-diphosphate. It functions in the pathway pyrimidine metabolism; UMP biosynthesis via de novo pathway; UMP from orotate: step 1/2. In terms of biological role, catalyzes the transfer of a ribosyl phosphate group from 5-phosphoribose 1-diphosphate to orotate, leading to the formation of orotidine monophosphate (OMP). This is Orotate phosphoribosyltransferase from Bifidobacterium animalis subsp. lactis (strain AD011).